Reading from the N-terminus, the 476-residue chain is tRNA (cytosine(72)-C(5))-methyltransferase NSUN6 (476 aa).

The PUA domain occupies 111–203 (QGEVIVGAQC…IGIRMTEPIY (93 aa)). Residues 242–248 (CAAPGGK), Asp-266, Asp-293, and Asp-323 each bind S-adenosyl-L-methionine. The active-site Nucleophile is the Cys-373. Lys-419 carries the N6-acetyllysine modification.

Belongs to the class I-like SAM-binding methyltransferase superfamily. RsmB/NOP family.

It is found in the cytoplasm. It carries out the reaction cytidine(72) in tRNA(Thr) + S-adenosyl-L-methionine = 5-methylcytidine(72) in tRNA(Thr) + S-adenosyl-L-homocysteine + H(+). The catalysed reaction is cytidine(72) in tRNA(Cys) + S-adenosyl-L-methionine = 5-methylcytidine(72) in tRNA(Cys) + S-adenosyl-L-homocysteine + H(+). In terms of biological role, S-adenosyl-L-methionine-dependent methyltransferase that specifically methylates the C5 position of cytosine 72 in tRNA(Thr)(TGT) and tRNA(Cys)(GCA). In vitro also methylates tRNA(Thr)(AGT). Methylation requires, in the acceptor stem region, the presence of the 3'-CCA terminus, the target site C72, the discriminator base U73, and the second and third base pairs (2:71 and 3:70) in the tRNA substrates. The sequence is that of tRNA (cytosine(72)-C(5))-methyltransferase NSUN6 from Mus musculus (Mouse).